Here is a 322-residue protein sequence, read N- to C-terminus: Transmembrane and ubiquitin-like domain-containing protein 2 (322 aa).

The chain crosses the membrane as a helical span at residues 38 to 58 (VVAGVVVLILALVLAWLSTYV). Residues 88 to 168 (VAGQGTPEPT…VRSEDSTCLP (81 aa)) are disordered. Gly residues predominate over residues 115-130 (EGGGDPTGEPGAGGGV). The Ubiquitin-like domain maps to 174–247 (ISVRLKFFND…IHCHRSPPGS (74 aa)). Helical transmembrane passes span 267–287 (LGVS…GVVW) and 296–316 (FFTA…SFLV).

It localises to the membrane. This is Transmembrane and ubiquitin-like domain-containing protein 2 (TMUB2) from Bos taurus (Bovine).